Here is a 711-residue protein sequence, read N- to C-terminus: Polyribonucleotide nucleotidyltransferase (711 aa).

Residues aspartate 490 and aspartate 496 each coordinate Mg(2+). The KH domain occupies 557-616 (PRIETMQIPTDKIREVIGSGGKVIREIVETSGAKVDINDDGIIKIASANGEAIKKAYEMI). Residues 626-694 (GKVYTGTVVK…DRGKVRLSMK (69 aa)) enclose the S1 motif domain.

The protein belongs to the polyribonucleotide nucleotidyltransferase family. Mg(2+) serves as cofactor.

It localises to the cytoplasm. It carries out the reaction RNA(n+1) + phosphate = RNA(n) + a ribonucleoside 5'-diphosphate. Functionally, involved in mRNA degradation. Catalyzes the phosphorolysis of single-stranded polyribonucleotides processively in the 3'- to 5'-direction. The chain is Polyribonucleotide nucleotidyltransferase from Dinoroseobacter shibae (strain DSM 16493 / NCIMB 14021 / DFL 12).